We begin with the raw amino-acid sequence, 209 residues long: Putative thymidylate synthase (209 aa).

Residue Cys137 is part of the active site.

Belongs to the thymidylate synthase family. Archaeal-type ThyA subfamily. As to quaternary structure, monomer.

Its subcellular location is the cytoplasm. It participates in pyrimidine metabolism; dTTP biosynthesis. In terms of biological role, may catalyze the biosynthesis of dTMP using an unknown cosubstrate. The chain is Putative thymidylate synthase from Methanopyrus kandleri (strain AV19 / DSM 6324 / JCM 9639 / NBRC 100938).